The chain runs to 329 residues: Cytosolic arginine sensor for mTORC1 subunit 2 (329 aa).

2 ACT domains span residues A72–L139 and E262–Q322.

The protein belongs to the GATS family. As to quaternary structure, may form homodimers and heterodimers.

Its subcellular location is the cytoplasm. It localises to the cytosol. In terms of biological role, functions as a negative regulator of the TORC1 signaling pathway. This Xenopus tropicalis (Western clawed frog) protein is Cytosolic arginine sensor for mTORC1 subunit 2.